The primary structure comprises 437 residues: Probable indole-3-pyruvate monooxygenase YUCCA3 (437 aa).

FAD is bound at residue 41 to 46 (GAGPSG). 212-217 (GCGNSG) contacts NADP(+).

It belongs to the FMO family. FAD is required as a cofactor.

It catalyses the reaction indole-3-pyruvate + NADPH + O2 + H(+) = (indol-3-yl)acetate + CO2 + NADP(+) + H2O. It functions in the pathway plant hormone metabolism; auxin biosynthesis. Its function is as follows. Involved in auxin biosynthesis. Belongs to the set of redundant YUCCA genes probably responsible for auxin biosynthesis in roots. The sequence is that of Probable indole-3-pyruvate monooxygenase YUCCA3 (YUC3) from Arabidopsis thaliana (Mouse-ear cress).